A 311-amino-acid polypeptide reads, in one-letter code: tRNA-cytidine(32) 2-sulfurtransferase (311 aa).

Residues 45–50 carry the PP-loop motif motif; the sequence is SGGKDS. Positions 120, 123, and 211 each coordinate [4Fe-4S] cluster.

It belongs to the TtcA family. Homodimer. The cofactor is Mg(2+). [4Fe-4S] cluster is required as a cofactor.

It is found in the cytoplasm. The catalysed reaction is cytidine(32) in tRNA + S-sulfanyl-L-cysteinyl-[cysteine desulfurase] + AH2 + ATP = 2-thiocytidine(32) in tRNA + L-cysteinyl-[cysteine desulfurase] + A + AMP + diphosphate + H(+). It participates in tRNA modification. In terms of biological role, catalyzes the ATP-dependent 2-thiolation of cytidine in position 32 of tRNA, to form 2-thiocytidine (s(2)C32). The sulfur atoms are provided by the cysteine/cysteine desulfurase (IscS) system. This is tRNA-cytidine(32) 2-sulfurtransferase from Shewanella halifaxensis (strain HAW-EB4).